Consider the following 632-residue polypeptide: MAU2 chromatid cohesion factor homolog (632 aa).

TPR repeat units follow at residues 453–486 and 493–526; these read GGFY…ANAE and SCSL…ASKI.

This sequence belongs to the SCC4/mau-2 family. In terms of assembly, interacts with Nipped-B to form the cohesin loading complex.

It localises to the nucleus. The protein localises to the nucleoplasm. Required for association of the cohesin complex with chromatin during interphase. Plays a role in sister chromatid cohesion and normal progression through prometaphase. This Drosophila simulans (Fruit fly) protein is MAU2 chromatid cohesion factor homolog.